A 179-amino-acid chain; its full sequence is UPF0200 protein TV0279 (179 aa).

Glycine 6–aspartate 13 is a binding site for ATP.

This sequence belongs to the UPF0200 family.

The sequence is that of UPF0200 protein TV0279 from Thermoplasma volcanium (strain ATCC 51530 / DSM 4299 / JCM 9571 / NBRC 15438 / GSS1).